The sequence spans 451 residues: Serine--tRNA ligase, cytoplasmic (451 aa).

236–238 contacts L-serine; sequence TSE. Residues 267 to 269 and Val-283 each bind ATP; that span reads RKE. Glu-290 is a binding site for L-serine. 354-357 contacts ATP; it reads ELVS. Thr-392 provides a ligand contact to L-serine.

This sequence belongs to the class-II aminoacyl-tRNA synthetase family. Type-1 seryl-tRNA synthetase subfamily. Homodimer. The tRNA molecule binds across the dimer.

The protein resides in the cytoplasm. It carries out the reaction tRNA(Ser) + L-serine + ATP = L-seryl-tRNA(Ser) + AMP + diphosphate + H(+). It catalyses the reaction tRNA(Sec) + L-serine + ATP = L-seryl-tRNA(Sec) + AMP + diphosphate + H(+). It participates in aminoacyl-tRNA biosynthesis; selenocysteinyl-tRNA(Sec) biosynthesis; L-seryl-tRNA(Sec) from L-serine and tRNA(Sec): step 1/1. Functionally, catalyzes the attachment of serine to tRNA(Ser). Is also able to aminoacylate tRNA(Sec) with serine, to form the misacylated tRNA L-seryl-tRNA(Sec), which will be further converted into selenocysteinyl-tRNA(Sec). The protein is Serine--tRNA ligase, cytoplasmic (serS) of Dictyostelium discoideum (Social amoeba).